The following is a 248-amino-acid chain: Probable transcriptional regulatory protein Oant_1200 (248 aa).

The protein belongs to the TACO1 family.

The protein localises to the cytoplasm. This Brucella anthropi (strain ATCC 49188 / DSM 6882 / CCUG 24695 / JCM 21032 / LMG 3331 / NBRC 15819 / NCTC 12168 / Alc 37) (Ochrobactrum anthropi) protein is Probable transcriptional regulatory protein Oant_1200.